The primary structure comprises 331 residues: ADP,ATP carrier protein 1, mitochondrial (331 aa).

Solcar repeat units follow at residues 29–122, 134–226, and 238–320; these read KNFA…FKRM, KWFG…LKPV, and ASFA…LQIL. Transmembrane regions (helical) follow at residues 31–58, 99–123, 132–152, 202–223, and 237–257; these read FAID…VKLL, TANV…KRMF, YWKW…SSLF, FNIS…YDSL, and FASF…SYPI. ADP-binding residues include R104 and K116. Residue R261 participates in ADP binding. Residues 261–266 are important for transport activity; it reads RRRMMM. The Nucleotide carrier signature motif signature appears at 261-266; the sequence is RRRMMM. A helical membrane pass occupies residues 297-317; it reads AGANILRAIAGAGVLSGYDQL.

This sequence belongs to the mitochondrial carrier (TC 2.A.29) family. In terms of assembly, monomer.

Its subcellular location is the mitochondrion inner membrane. The enzyme catalyses ADP(in) + ATP(out) = ADP(out) + ATP(in). Its activity is regulated as follows. The matrix-open state (m-state) is inhibited by the membrane-permeable bongkrekic acid (BKA). The cytoplasmic-open state (c-state) is inhibited by the membrane-impermeable toxic inhibitor carboxyatractyloside (CATR). Functionally, ADP:ATP antiporter that mediates import of ADP into the mitochondrial matrix for ATP synthesis, and export of ATP out to fuel the cell. Cycles between the cytoplasmic-open state (c-state) and the matrix-open state (m-state): operates by the alternating access mechanism with a single substrate-binding site intermittently exposed to either the cytosolic (c-state) or matrix (m-state) side of the inner mitochondrial membrane. In Triticum aestivum (Wheat), this protein is ADP,ATP carrier protein 1, mitochondrial (ANT-G1).